Reading from the N-terminus, the 505-residue chain is Cyclic AMP-dependent transcription factor ATF-2 (505 aa).

The short motif at methionine 1–valine 7 is the Nuclear export signal 1 (N-NES) element. The C2H2-type zinc finger occupies phenylalanine 25–histidine 49. Phosphothreonine; by PKC/PRKCH is present on threonine 52. The residue at position 62 (serine 62) is a Phosphoserine; by VRK1. Threonine 69 is modified (phosphothreonine; by MAPK11 and MAPK14). At threonine 71 the chain carries Phosphothreonine; by MAPK1, MAPK3, MAPK11, MAPK12, MAPK14 and PLK3. Position 73 is a phosphothreonine; by VRK1 (threonine 73). A phosphoserine mark is found at serine 90 and serine 112. Threonine 116 is modified (phosphothreonine). Serine 121 is subject to Phosphoserine; by PKC/PRKCA and PKC/PRKCB. Disordered stretches follow at residues glutamate 125–glutamine 155 and proline 259–arginine 373. Phosphoserine is present on serine 136. A compositionally biased stretch (polar residues) spans leucine 282–aspartate 293. The interval lysine 296–glycine 299 is essential for its histone acetyltransferase activity. Residues proline 318–proline 334 are compositionally biased toward low complexity. Residue serine 328 is modified to Phosphoserine. Serine 340 is subject to Phosphoserine; by PKC/PRKCA and PKC/PRKCB. A compositionally biased stretch (basic and acidic residues) spans alanine 346–arginine 363. The region spanning aspartate 352–histidine 415 is the bZIP domain. The basic motif stretch occupies residues lysine 354–lysine 374. Lysine 357 is subject to N6-acetyllysine. Serine 367 is subject to Phosphoserine; by PKC/PRKCA and PKC/PRKCB. Lysine 374 carries the post-translational modification N6-acetyllysine. Residues leucine 380–leucine 408 are leucine-zipper. The Nuclear export signal 2 (C-NES) signature appears at valine 405 to alanine 414. The interval lysine 425 to valine 472 is disordered. Phosphoserine is present on residues serine 442 and serine 446. Polar residues predominate over residues valine 443–histidine 454. A compositionally biased stretch (low complexity) spans serine 455–serine 467. Phosphoserine; by ATM is present on residues serine 490 and serine 498.

It belongs to the bZIP family. ATF subfamily. Binds DNA as a dimer and can form a homodimer in the absence of DNA. Can form a heterodimer with JUN. Heterodimerization is essential for its transcriptional activity. Interacts with SMAD3 and SMAD4. Binds through its N-terminal region to UTF1 which acts as a coactivator of ATF2 transcriptional activity. Interacts with the HK1/VDAC1 complex. Interacts with NBN, MRE11, XPO1, KAT5 and CUL3. Phosphorylation of Thr-69 by MAPK14 and MAPK11, and at Thr-71 by MAPK1/ERK2, MAPK3/ERK1, MAPK11, MAPK12 and MAPK14 in response to external stimulus like insulin causes increased transcriptional activity. Phosphorylated by PLK3 following hyperosmotic stress. Also phosphorylated and activated by JNK and CaMK4. ATM-mediated phosphorylation at Ser-490 and Ser-498 stimulates its function in DNA damage response. Phosphorylation at Ser-62, Thr-73 and Ser-121 activates its transcriptional activity. Phosphorylation at Thr-69 or Thr-71 enhances acetylation of histones H2B and H4. As to expression, ubiquitously expressed, with more abundant expression in the brain.

It is found in the nucleus. The protein localises to the cytoplasm. The protein resides in the mitochondrion outer membrane. Transcriptional activator which regulates the transcription of various genes, including those involved in anti-apoptosis, cell growth, and DNA damage response. Dependent on its binding partner, binds to CRE (cAMP response element) consensus sequences (5'-TGACGTCA-3') or to AP-1 (activator protein 1) consensus sequences (5'-TGACTCA-3'). In the nucleus, contributes to global transcription and the DNA damage response, in addition to specific transcriptional activities that are related to cell development, proliferation and death. In the cytoplasm, interacts with and perturbs HK1- and VDAC1-containing complexes at the mitochondrial outer membrane, thereby impairing mitochondrial membrane potential, inducing mitochondrial leakage and promoting cell death. The phosphorylated form (mediated by ATM) plays a role in the DNA damage response and is involved in the ionizing radiation (IR)-induced S phase checkpoint control and in the recruitment of the MRN complex into the IR-induced foci (IRIF). Exhibits histone acetyltransferase (HAT) activity which specifically acetylates histones H2B and H4 in vitro. In concert with CUL3 and RBX1, promotes the degradation of KAT5 thereby attenuating its ability to acetylate and activate ATM. Can elicit oncogenic or tumor suppressor activities depending on the tissue or cell type. The sequence is that of Cyclic AMP-dependent transcription factor ATF-2 (ATF2) from Homo sapiens (Human).